Here is a 351-residue protein sequence, read N- to C-terminus: Outer membrane porin PhoE (351 aa).

A signal peptide spans 1-21; sequence MKKSTLALVVMGIVASASVQA.

This sequence belongs to the Gram-negative porin family. As to quaternary structure, homotrimer. Forms mixed heterotrimers with OmpC and with OmpF; other mixed heterotrimers are also probable.

It is found in the cell outer membrane. Functionally, uptake of inorganic phosphate, phosphorylated compounds, and some other negatively charged solutes. The sequence is that of Outer membrane porin PhoE (phoE) from Escherichia coli (strain K12).